Here is a 394-residue protein sequence, read N- to C-terminus: NAD(P)H-quinone oxidoreductase subunit H (394 aa).

This sequence belongs to the complex I 49 kDa subunit family. NDH-1 can be composed of about 15 different subunits; different subcomplexes with different compositions have been identified which probably have different functions.

The protein localises to the cellular thylakoid membrane. The catalysed reaction is a plastoquinone + NADH + (n+1) H(+)(in) = a plastoquinol + NAD(+) + n H(+)(out). It carries out the reaction a plastoquinone + NADPH + (n+1) H(+)(in) = a plastoquinol + NADP(+) + n H(+)(out). Its function is as follows. NDH-1 shuttles electrons from an unknown electron donor, via FMN and iron-sulfur (Fe-S) centers, to quinones in the respiratory and/or the photosynthetic chain. The immediate electron acceptor for the enzyme in this species is believed to be plastoquinone. Couples the redox reaction to proton translocation, and thus conserves the redox energy in a proton gradient. Cyanobacterial NDH-1 also plays a role in inorganic carbon-concentration. In Parasynechococcus marenigrum (strain WH8102), this protein is NAD(P)H-quinone oxidoreductase subunit H.